Here is a 304-residue protein sequence, read N- to C-terminus: Acetaldehyde dehydrogenase 4 (304 aa).

The active-site Acyl-thioester intermediate is Cys131. NAD(+) is bound by residues Ser162 to Asn170 and Asn273.

This sequence belongs to the acetaldehyde dehydrogenase family.

The catalysed reaction is acetaldehyde + NAD(+) + CoA = acetyl-CoA + NADH + H(+). The sequence is that of Acetaldehyde dehydrogenase 4 from Dechloromonas aromatica (strain RCB).